The chain runs to 201 residues: 3-isopropylmalate dehydratase small subunit (201 aa).

Belongs to the LeuD family. LeuD type 1 subfamily. Heterodimer of LeuC and LeuD.

The enzyme catalyses (2R,3S)-3-isopropylmalate = (2S)-2-isopropylmalate. It functions in the pathway amino-acid biosynthesis; L-leucine biosynthesis; L-leucine from 3-methyl-2-oxobutanoate: step 2/4. Catalyzes the isomerization between 2-isopropylmalate and 3-isopropylmalate, via the formation of 2-isopropylmaleate. The polypeptide is 3-isopropylmalate dehydratase small subunit (Escherichia coli O157:H7).